The chain runs to 481 residues: 3-isopropylmalate dehydratase large subunit (481 aa).

Residues cysteine 357, cysteine 417, and cysteine 420 each contribute to the [4Fe-4S] cluster site. Residues 429–441 (SPGQRCASTSNRN) are compositionally biased toward polar residues. The segment at 429-451 (SPGQRCASTSNRNFEGRQGKGGR) is disordered.

It belongs to the aconitase/IPM isomerase family. LeuC type 1 subfamily. Heterodimer of LeuC and LeuD. The cofactor is [4Fe-4S] cluster.

The enzyme catalyses (2R,3S)-3-isopropylmalate = (2S)-2-isopropylmalate. It functions in the pathway amino-acid biosynthesis; L-leucine biosynthesis; L-leucine from 3-methyl-2-oxobutanoate: step 2/4. Its function is as follows. Catalyzes the isomerization between 2-isopropylmalate and 3-isopropylmalate, via the formation of 2-isopropylmaleate. The protein is 3-isopropylmalate dehydratase large subunit of Mycobacterium sp. (strain JLS).